A 427-amino-acid chain; its full sequence is Beta-1,3-galactosyl-O-glycosyl-glycoprotein beta-1,6-N-acetylglucosaminyltransferase (427 aa).

Topologically, residues 1 to 9 are cytoplasmic; sequence MLRKLWRRK. The mediates interaction with GOLPH3 and is necessary and sufficient for localization to the Golgi stretch occupies residues 5-9; the sequence is LWRRK. A helical; Signal-anchor for type II membrane protein transmembrane segment spans residues 10 to 32; it reads LFSFPTKYYFLFLAFSVVTFTVL. A stem region region spans residues 33 to 121; the sequence is RIHQKTEFVN…EPLSKEEAGF (89 aa). The Lumenal segment spans residues 33 to 427; the sequence is RIHQKTEFVN…RHKALETLKP (395 aa). 2 N-linked (GlcNAc...) asparagine glycosylation sites follow: Asn-58 and Asn-95. Disulfide bonds link Cys-59–Cys-412, Cys-100–Cys-172, Cys-151–Cys-199, and Cys-372–Cys-380. A catalytic region spans residues 122–427; the sequence is PIAYSIVVHH…RHKALETLKP (306 aa). Residues 128-130, 155-157, and Tyr-187 contribute to the UDP-N-acetyl-alpha-D-glucosamine site; these read VVH and DAK. Residues Glu-243, Lys-251, Arg-254, Glu-320, Lys-341, and Tyr-358 each contribute to the a glycoprotein site. Residue Glu-320 is the Nucleophile of the active site. Positions 377 and 400 each coordinate UDP-N-acetyl-alpha-D-glucosamine.

The protein belongs to the glycosyltransferase 14 family. In terms of assembly, interacts with GOLPH3; may control GCNT1 retention in the Golgi. Expressed in tracheal submucosal glands and epithelium (at protein level).

The protein resides in the golgi apparatus membrane. It catalyses the reaction a 3-O-[beta-D-galactosyl-(1-&gt;3)-N-acetyl-alpha-D-galactosaminyl]-L-seryl-[protein] + UDP-N-acetyl-alpha-D-glucosamine = 3-O-{beta-D-galactosyl-(1-&gt;3)-[N-acetyl-beta-D-glucosaminyl-(1-&gt;6)]-N-acetyl-alpha-D-galactosaminyl}-L-seryl-[protein] + UDP + H(+). The enzyme catalyses a 3-O-[beta-D-galactosyl-(1-&gt;3)-N-acetyl-alpha-D-galactosaminyl]-L-threonyl-[protein] + UDP-N-acetyl-alpha-D-glucosamine = a 3-O-{beta-D-galactosyl-(1-&gt;3)-[N-acetyl-beta-D-glucosaminyl-(1-&gt;6)]-N-acetyl-alpha-D-galactosaminyl}-L-threonyl-[protein] + UDP + H(+). It carries out the reaction a globoside GalGb4Cer + UDP-N-acetyl-alpha-D-glucosamine = a globoside GlcNAc-(beta1-&gt;6)-GalGb4Cer + UDP + H(+). The catalysed reaction is a ganglioside GA1 + UDP-N-acetyl-alpha-D-glucosamine = a ganglioside beta-D-GlcNAc-(1-&gt;6)-GA1 + UDP + H(+). It functions in the pathway protein modification; protein glycosylation. The protein operates within glycolipid biosynthesis. In terms of biological role, glycosyltransferase that catalyzes the transfer of an N-acetylglucosamine (GlcNAc) moiety in beta1-6 linkage from UDP-GlcNAc onto mucin-type core 1 O-glycan to form the branched mucin-type core 2 O-glycan. The catalysis is metal ion-independent and occurs with inversion of the anomeric configuration of sugar donor. Selectively involved in synthesis of mucin-type core 2 O-glycans that serve as scaffolds for the display of selectin ligand sialyl Lewis X epitope by myeloid cells, with an impact on homeostasis and recruitment to inflammatory sites. Can also act on glycolipid substrates. Transfers GlcNAc moiety to GalGb4Cer globosides in a reaction step to the synthesis of stage-specific embryonic antigen 1 (SSEA-1) determinant. Can use Galbeta1-3GalNAcalpha1- and Galbeta1-3GalNAcbeta1- oligosaccharide derivatives as acceptor substrates. In Bos taurus (Bovine), this protein is Beta-1,3-galactosyl-O-glycosyl-glycoprotein beta-1,6-N-acetylglucosaminyltransferase (GCNT1).